Reading from the N-terminus, the 156-residue chain is Small ribosomal subunit protein uS7 (156 aa).

Belongs to the universal ribosomal protein uS7 family. As to quaternary structure, part of the 30S ribosomal subunit. Contacts proteins S9 and S11.

Its function is as follows. One of the primary rRNA binding proteins, it binds directly to 16S rRNA where it nucleates assembly of the head domain of the 30S subunit. Is located at the subunit interface close to the decoding center, probably blocks exit of the E-site tRNA. This Moorella thermoacetica (strain ATCC 39073 / JCM 9320) protein is Small ribosomal subunit protein uS7.